The chain runs to 462 residues: Chromosomal replication initiator protein DnaA (462 aa).

The domain I, interacts with DnaA modulators stretch occupies residues 1–84 (MAVSLWQQCI…RFDIGSRPSA (84 aa)). The tract at residues 84 to 125 (APRPVQATAAVERPKFEQNTKPAKTSFNVNSPEPAMAANHRS) is domain II. Residues 126–342 (NINRTYQFEN…GALNRVIANA (217 aa)) are domain III, AAA+ region. Positions 170, 172, 173, and 174 each coordinate ATP. Positions 343 to 462 (NFTGRPITID…YANLIRTLSS (120 aa)) are domain IV, binds dsDNA.

It belongs to the DnaA family. Oligomerizes as a right-handed, spiral filament on DNA at oriC.

The protein localises to the cytoplasm. In terms of biological role, plays an essential role in the initiation and regulation of chromosomal replication. ATP-DnaA binds to the origin of replication (oriC) to initiate formation of the DNA replication initiation complex once per cell cycle. Binds the DnaA box (a 9 base pair repeat at the origin) and separates the double-stranded (ds)DNA. Forms a right-handed helical filament on oriC DNA; dsDNA binds to the exterior of the filament while single-stranded (ss)DNA is stabiized in the filament's interior. The ATP-DnaA-oriC complex binds and stabilizes one strand of the AT-rich DNA unwinding element (DUE), permitting loading of DNA polymerase. After initiation quickly degrades to an ADP-DnaA complex that is not apt for DNA replication. Binds acidic phospholipids. This is Chromosomal replication initiator protein DnaA from Shewanella sediminis (strain HAW-EB3).